Here is a 605-residue protein sequence, read N- to C-terminus: Leucine-rich repeat-containing protein 40 (605 aa).

Residues 1–21 (MSRFKRGGKAPDPLSGFRAPK) form a disordered region. 19 LRR repeats span residues 83–104 (DLTK…ISLL), 106–127 (ALVV…IREL), 129–151 (NLQK…QHLQ), 152–173 (NLKS…IGHL), 175–196 (ILEE…VGQL), 198–219 (GLVK…IGKM), 221–242 (NLRQ…VAGM), 244–265 (SLEQ…PFLT), 266–287 (KLKE…HLQN), 290–311 (SLSV…ISLL), 313–335 (GLER…GSLP), 336–357 (NLKS…ILNK), 429–450 (PITT…IVEM), 453–475 (SVYD…CMLL), 476–497 (KLTH…MEAL), 499–520 (RLQS…LYTI), 522–543 (NLET…QLKK), 546–567 (KLST…LGNC), and 569–590 (SLRA…ILAK).

This Xenopus laevis (African clawed frog) protein is Leucine-rich repeat-containing protein 40 (lrrc40).